Here is a 1041-residue protein sequence, read N- to C-terminus: Integrator complex subunit 3 (1041 aa).

The residue at position 1 (M1) is an N-acetylmethionine. 3 positions are modified to phosphoserine: S500, S535, and S993. The tract at residues 975 to 1041 (YEDSSTKPPK…GSSAVGSDSD (67 aa)) is disordered. Positions 1006–1020 (AEEESGSSSASEEED) are enriched in acidic residues.

It belongs to the Integrator subunit 3 family. In terms of assembly, component of the Integrator complex, composed of core subunits INTS1, INTS2, INTS3, INTS4, INTS5, INTS6, INTS7, INTS8, INTS9/RC74, INTS10, INTS11/CPSF3L, INTS12, INTS13, INTS14 and INTS15. The core complex associates with protein phosphatase 2A subunits PPP2CA and PPP2R1A, to form the Integrator-PP2A (INTAC) complex. Component of the SOSS complex, composed of SOSS-B (SOSS-B1/NABP2 or SOSS-B2/NABP1), SOSS-A/INTS3 and SOSS-C/INIP. SOSS complexes containing SOSS-B1/NABP2 are more abundant than complexes containing SOSS-B2/NABP1. Interacts with SOSS-B1/NABP2, SOSS-B2/NABP1 and SOSS-C/INIP; the interaction is direct. Interacts with NBN/NBS1.

The protein resides in the nucleus. Its subcellular location is the cytoplasm. Component of the integrator complex, a multiprotein complex that terminates RNA polymerase II (Pol II) transcription in the promoter-proximal region of genes. The integrator complex provides a quality checkpoint during transcription elongation by driving premature transcription termination of transcripts that are unfavorably configured for transcriptional elongation: the complex terminates transcription by (1) catalyzing dephosphorylation of the C-terminal domain (CTD) of Pol II subunit POLR2A/RPB1 and SUPT5H/SPT5, (2) degrading the exiting nascent RNA transcript via endonuclease activity and (3) promoting the release of Pol II from bound DNA. The integrator complex is also involved in terminating the synthesis of non-coding Pol II transcripts, such as enhancer RNAs (eRNAs), small nuclear RNAs (snRNAs), telomerase RNAs and long non-coding RNAs (lncRNAs). Within the integrator complex, INTS3 is involved in the post-termination step: INTS3 binds INTS7 in the open conformation of integrator complex and prevents the rebinding of Pol II to the integrator after termination cycle. Mediates recruitment of cytoplasmic dynein to the nuclear envelope, probably as component of the integrator complex. Functionally, component of the SOSS complex, a multiprotein complex that functions downstream of the MRN complex to promote DNA repair and G2/M checkpoint. The SOSS complex associates with single-stranded DNA at DNA lesions and influences diverse endpoints in the cellular DNA damage response including cell-cycle checkpoint activation, recombinational repair and maintenance of genomic stability. The SOSS complex is required for efficient homologous recombination-dependent repair of double-strand breaks (DSBs) and ATM-dependent signaling pathways. In the SOSS complex, it is required for the assembly of the complex and for stabilization of the complex at DNA damage sites. The chain is Integrator complex subunit 3 (Ints3) from Mus musculus (Mouse).